The chain runs to 261 residues: Thiazole synthase (261 aa).

Lys-97 (schiff-base intermediate with DXP) is an active-site residue. Residues Gly-158, 184–185 (AG), and 206–207 (AS) contribute to the 1-deoxy-D-xylulose 5-phosphate site.

Belongs to the ThiG family. Homotetramer. Forms heterodimers with either ThiH or ThiS.

Its subcellular location is the cytoplasm. It carries out the reaction [ThiS sulfur-carrier protein]-C-terminal-Gly-aminoethanethioate + 2-iminoacetate + 1-deoxy-D-xylulose 5-phosphate = [ThiS sulfur-carrier protein]-C-terminal Gly-Gly + 2-[(2R,5Z)-2-carboxy-4-methylthiazol-5(2H)-ylidene]ethyl phosphate + 2 H2O + H(+). It functions in the pathway cofactor biosynthesis; thiamine diphosphate biosynthesis. In terms of biological role, catalyzes the rearrangement of 1-deoxy-D-xylulose 5-phosphate (DXP) to produce the thiazole phosphate moiety of thiamine. Sulfur is provided by the thiocarboxylate moiety of the carrier protein ThiS. In vitro, sulfur can be provided by H(2)S. The sequence is that of Thiazole synthase from Corynebacterium diphtheriae (strain ATCC 700971 / NCTC 13129 / Biotype gravis).